The sequence spans 731 residues: Fatty acid oxidation complex subunit alpha (731 aa).

The interval Thr-15–Pro-204 is enoyl-CoA hydratase. The tract at residues Lys-320–Ser-729 is 3-hydroxyacyl-CoA dehydrogenase.

It in the N-terminal section; belongs to the enoyl-CoA hydratase/isomerase family. The protein in the central section; belongs to the 3-hydroxyacyl-CoA dehydrogenase family. As to quaternary structure, heterotetramer of two alpha chains (FadJ) and two beta chains (FadI).

Its subcellular location is the cytoplasm. It catalyses the reaction a (3S)-3-hydroxyacyl-CoA = a (2E)-enoyl-CoA + H2O. It carries out the reaction a 4-saturated-(3S)-3-hydroxyacyl-CoA = a (3E)-enoyl-CoA + H2O. The enzyme catalyses a (3S)-3-hydroxyacyl-CoA + NAD(+) = a 3-oxoacyl-CoA + NADH + H(+). The catalysed reaction is (3S)-3-hydroxybutanoyl-CoA = (3R)-3-hydroxybutanoyl-CoA. It functions in the pathway lipid metabolism; fatty acid beta-oxidation. Functionally, catalyzes the formation of a hydroxyacyl-CoA by addition of water on enoyl-CoA. Also exhibits 3-hydroxyacyl-CoA epimerase and 3-hydroxyacyl-CoA dehydrogenase activities. The polypeptide is Fatty acid oxidation complex subunit alpha (Pectobacterium atrosepticum (strain SCRI 1043 / ATCC BAA-672) (Erwinia carotovora subsp. atroseptica)).